The primary structure comprises 151 residues: Ubiquitin-conjugating enzyme E2 W (151 aa).

The UBC core domain occupies 3–151 (SMQKRLQKEL…TKWWYHDDTC (149 aa)). Residue cysteine 91 is the Glycyl thioester intermediate of the active site.

Belongs to the ubiquitin-conjugating enzyme family.

The protein localises to the nucleus. It catalyses the reaction S-ubiquitinyl-[E1 ubiquitin-activating enzyme]-L-cysteine + [E2 ubiquitin-conjugating enzyme]-L-cysteine = [E1 ubiquitin-activating enzyme]-L-cysteine + S-ubiquitinyl-[E2 ubiquitin-conjugating enzyme]-L-cysteine.. The enzyme catalyses S-ubiquitinyl-[E1 ubiquitin-activating enzyme]-L-cysteine + [acceptor protein]-N-terminal-amino acid = [E1 ubiquitin-activating enzyme]-L-cysteine + N-terminal-ubiquitinyl-[acceptor protein].. It functions in the pathway protein modification; protein ubiquitination. Its function is as follows. Accepts ubiquitin from the E1 complex and catalyzes its covalent attachment to other proteins. Catalyzes monoubiquitination. Involved in degradation of misfolded chaperone substrate and DNA repair. In Xenopus tropicalis (Western clawed frog), this protein is Ubiquitin-conjugating enzyme E2 W (ube2w).